The following is a 140-amino-acid chain: Large ribosomal subunit protein bL17 (140 aa).

It belongs to the bacterial ribosomal protein bL17 family. As to quaternary structure, part of the 50S ribosomal subunit. Contacts protein L32.

This is Large ribosomal subunit protein bL17 from Roseobacter denitrificans (strain ATCC 33942 / OCh 114) (Erythrobacter sp. (strain OCh 114)).